Reading from the N-terminus, the 240-residue chain is Octanoyltransferase (240 aa).

The BPL/LPL catalytic domain occupies 31–216 (GQVGDTLLLL…HLCAVFDLEP (186 aa)). Substrate-binding positions include 76–83 (RGGGATYH), 145–147 (AIG), and 159–161 (GLA). The active-site Acyl-thioester intermediate is the Cys177.

The protein belongs to the LipB family.

The protein localises to the cytoplasm. The catalysed reaction is octanoyl-[ACP] + L-lysyl-[protein] = N(6)-octanoyl-L-lysyl-[protein] + holo-[ACP] + H(+). It functions in the pathway protein modification; protein lipoylation via endogenous pathway; protein N(6)-(lipoyl)lysine from octanoyl-[acyl-carrier-protein]: step 1/2. Functionally, catalyzes the transfer of endogenously produced octanoic acid from octanoyl-acyl-carrier-protein onto the lipoyl domains of lipoate-dependent enzymes. Lipoyl-ACP can also act as a substrate although octanoyl-ACP is likely to be the physiological substrate. In Roseiflexus sp. (strain RS-1), this protein is Octanoyltransferase.